Reading from the N-terminus, the 306-residue chain is Pantothenate kinase (306 aa).

90 to 97 (GSVAVGKS) provides a ligand contact to ATP.

The protein belongs to the prokaryotic pantothenate kinase family.

It is found in the cytoplasm. The enzyme catalyses (R)-pantothenate + ATP = (R)-4'-phosphopantothenate + ADP + H(+). The protein operates within cofactor biosynthesis; coenzyme A biosynthesis; CoA from (R)-pantothenate: step 1/5. This Listeria innocua serovar 6a (strain ATCC BAA-680 / CLIP 11262) protein is Pantothenate kinase (coaA).